Here is a 349-residue protein sequence, read N- to C-terminus: Bifunctional protein FolKE (349 aa).

The segment at 1 to 226 (MQTTYLSMGS…LFEIDSSKTD (226 aa)) is 2-amino-4-hydroxy-6-hydroxymethyldihydropteridine pyrophosphokinase. Positions 226–349 (DSIVLIKDIP…KRMEFLESLL (124 aa)) are GTP cyclohydrolase 1.

The protein in the N-terminal section; belongs to the HPPK family. In the C-terminal section; belongs to the GTP cyclohydrolase I family. As to quaternary structure, homomer.

The enzyme catalyses 6-hydroxymethyl-7,8-dihydropterin + ATP = (7,8-dihydropterin-6-yl)methyl diphosphate + AMP + H(+). It carries out the reaction GTP + H2O = 7,8-dihydroneopterin 3'-triphosphate + formate + H(+). It participates in cofactor biosynthesis; 7,8-dihydroneopterin triphosphate biosynthesis; 7,8-dihydroneopterin triphosphate from GTP: step 1/1. The protein operates within cofactor biosynthesis; tetrahydrofolate biosynthesis; 2-amino-4-hydroxy-6-hydroxymethyl-7,8-dihydropteridine diphosphate from 7,8-dihydroneopterin triphosphate: step 4/4. The sequence is that of Bifunctional protein FolKE (folKE) from Lactococcus lactis subsp. lactis (strain IL1403) (Streptococcus lactis).